Here is a 369-residue protein sequence, read N- to C-terminus: ATP-dependent (S)-NAD(P)H-hydrate dehydratase (369 aa).

In terms of domain architecture, YjeF C-terminal spans 14 to 356 (LFQKARKLVP…DEVHESFLTL (343 aa)). Residues glycine 126 and 179–185 (NVNEFSR) each bind (6S)-NADPHX. Residues 231–235 (KGPHD) and 250–259 (GGLKRSGGQG) contribute to the ATP site. Aspartate 260 serves as a coordination point for (6S)-NADPHX. Residues 284–306 (GEQEHSKEAENKEEVQGELESNK) are compositionally biased toward basic and acidic residues. Residues 284 to 307 (GEQEHSKEAENKEEVQGELESNKR) are disordered.

Belongs to the NnrD/CARKD family. Requires Mg(2+) as cofactor.

It is found in the cytoplasm. The catalysed reaction is (6S)-NADHX + ATP = ADP + phosphate + NADH + H(+). It catalyses the reaction (6S)-NADPHX + ATP = ADP + phosphate + NADPH + H(+). Its function is as follows. Catalyzes the dehydration of the S-form of NAD(P)HX at the expense of ATP, which is converted to ADP. Together with NAD(P)HX epimerase, which catalyzes the epimerization of the S- and R-forms, the enzyme allows the repair of both epimers of NAD(P)HX, a damaged form of NAD(P)H that is a result of enzymatic or heat-dependent hydration. This chain is ATP-dependent (S)-NAD(P)H-hydrate dehydratase, found in Emericella nidulans (strain FGSC A4 / ATCC 38163 / CBS 112.46 / NRRL 194 / M139) (Aspergillus nidulans).